The primary structure comprises 208 residues: MVSRRVQALLDQLRAQGIQDEQVLNALAAVPREKFVDEAFEQKAWDNIALPIGQGQTISQPYMVARMTELLELTPQSRVLETGTGSGYQTAILAHLVQHVCSVERIKGLQWQARRRLKNLDLHNVSTRHGDGWQGWQARAPFDAIIVTAAPPEIPTALMTQLDEGGILVLPVGEEHQYLKRVRRRGGEFIIDTVEAVRFVPLVKGELA.

S59 is a catalytic residue.

Belongs to the methyltransferase superfamily. L-isoaspartyl/D-aspartyl protein methyltransferase family. As to quaternary structure, monomer.

The protein resides in the cytoplasm. The enzyme catalyses [protein]-L-isoaspartate + S-adenosyl-L-methionine = [protein]-L-isoaspartate alpha-methyl ester + S-adenosyl-L-homocysteine. Catalyzes the methyl esterification of L-isoaspartyl residues in peptides and proteins that result from spontaneous decomposition of normal L-aspartyl and L-asparaginyl residues. It plays a role in the repair and/or degradation of damaged proteins. This chain is Protein-L-isoaspartate O-methyltransferase (pcm), found in Shigella flexneri.